A 282-amino-acid chain; its full sequence is tRNA U34 carboxymethyltransferase (282 aa).

Carboxy-S-adenosyl-L-methionine is bound by residues lysine 54, tryptophan 68, lysine 73, glycine 92, 114–116 (DPS), tyrosine 161, and arginine 276.

It belongs to the class I-like SAM-binding methyltransferase superfamily. CmoB family. Homotetramer.

It carries out the reaction carboxy-S-adenosyl-L-methionine + 5-hydroxyuridine(34) in tRNA = 5-carboxymethoxyuridine(34) in tRNA + S-adenosyl-L-homocysteine + H(+). In terms of biological role, catalyzes carboxymethyl transfer from carboxy-S-adenosyl-L-methionine (Cx-SAM) to 5-hydroxyuridine (ho5U) to form 5-carboxymethoxyuridine (cmo5U) at position 34 in tRNAs. This Campylobacter fetus subsp. fetus (strain 82-40) protein is tRNA U34 carboxymethyltransferase.